We begin with the raw amino-acid sequence, 100 residues long: Glutamyl-tRNA(Gln) amidotransferase subunit C (100 aa).

The protein belongs to the GatC family. Heterotrimer of A, B and C subunits.

It catalyses the reaction L-glutamyl-tRNA(Gln) + L-glutamine + ATP + H2O = L-glutaminyl-tRNA(Gln) + L-glutamate + ADP + phosphate + H(+). The enzyme catalyses L-aspartyl-tRNA(Asn) + L-glutamine + ATP + H2O = L-asparaginyl-tRNA(Asn) + L-glutamate + ADP + phosphate + 2 H(+). In terms of biological role, allows the formation of correctly charged Asn-tRNA(Asn) or Gln-tRNA(Gln) through the transamidation of misacylated Asp-tRNA(Asn) or Glu-tRNA(Gln) in organisms which lack either or both of asparaginyl-tRNA or glutaminyl-tRNA synthetases. The reaction takes place in the presence of glutamine and ATP through an activated phospho-Asp-tRNA(Asn) or phospho-Glu-tRNA(Gln). This is Glutamyl-tRNA(Gln) amidotransferase subunit C from Rickettsia conorii (strain ATCC VR-613 / Malish 7).